A 432-amino-acid polypeptide reads, in one-letter code: Peptidyl-prolyl cis-trans isomerase cyp6 (432 aa).

Residues 1–168 (MSVLIETTVG…RDIRIKHTII (168 aa)) enclose the PPIase cyclophilin-type domain. Residue S206 is modified to Phosphoserine. The RRM domain occupies 244–322 (NVLFVCKLNP…SRIHVDFSQS (79 aa)). Residues 330-432 (YNSNRDRKRS…DRRYRDDRYR (103 aa)) are disordered. Composition is skewed to basic and acidic residues over residues 341–366 (SRSD…DDYR), 373–395 (DHRD…DDRS), and 406–432 (NCDD…DRYR).

The protein belongs to the cyclophilin-type PPIase family. PPIL4 subfamily.

Its subcellular location is the nucleus. It catalyses the reaction [protein]-peptidylproline (omega=180) = [protein]-peptidylproline (omega=0). In terms of biological role, PPIases accelerate the folding of proteins. It catalyzes the cis-trans isomerization of proline imidic peptide bonds in oligopeptides. The polypeptide is Peptidyl-prolyl cis-trans isomerase cyp6 (cyp6) (Schizosaccharomyces pombe (strain 972 / ATCC 24843) (Fission yeast)).